The following is a 398-amino-acid chain: MVLNHSPPPGLYITGLGSQYPPYLLGPEKLEEFAARFYDVESPGLKKLLQINRSSGIETRSAIRSYESGFATRPEAPTISELAEFYHQAGVDLTTQACKKALRESQISPQHVTHTIGVTCTNQGNPGFDLLVNRKLGLSANVDRMLLHGVGCAGGLAIMRAAAQIACGASMRRKPVRILAFACELCTPNVRHDLAFAEKAPNAENISIAGALFSDAAAAFVLCNEYAMAETEITPLFQLLEWGNSLIPDTVEHMAFFADVDGYRTVLTRDVPQYTKHAIGPMFEKLLPSYQSQIQSSSGEGVGEVAKSLGVSDFDWALHPGGEAIIEGAKQVLGLTEDQLQASREIYRTRGNSSSATVLIVLDRLRSLGKREYVVATSFGPGLAIEMAMLRRCEVDED.

Residues Lys47 and 47–54 each bind CoA; that span reads KLLQINRS. The active-site Nucleophile is Cys152. 214 to 215 provides a ligand contact to substrate; that stretch reads SD. Residues Leu267, Gly321, 321 to 324, and Ala324 each bind CoA; that span reads GGEA.

It belongs to the thiolase-like superfamily. Chalcone/stilbene synthases family. Homodimer.

The enzyme catalyses 11 malonyl-CoA + acetyl-CoA + S-adenosyl-L-methionine + 12 NADPH + 22 H(+) = soppiline B + S-adenosyl-L-homocysteine + 12 CO2 + 12 NADP(+) + 12 CoA + 8 H2O. Its pathway is secondary metabolite biosynthesis. Type III polyketide synthase; part of the gene cluster that mediates the biosynthesis of the alkylresorcinols called soppilines. The biosynthesis starts with the HR-PKS pspA-catalyzed carbon chain assembly through nine chain elongation cycles, using acetyl CoA and malonyl CoA as a starter and extender units, respectively, to produce the polyketide soppiline A. In the first round, the KR, DH, and CMeT domains work to produce 2-methyl-2-butenyl thioester. In rounds 2 to 5, the KR, DH, and ER domains fully catalyze the reduction of the elongated beta-ketothioester, resulting in the insertion of eight methylene units. The unusual Z,E,Z-triene motif is likely constructed during rounds 6 to 8. Typically, the DH domain introduces a double bond at an alpha,beta-position of an elongated polyketide chain, with the dehydration of a beta-hydroxy group. The last extension cycle would be carried out with L-oriented beta-ketoreduction by the KR domain to produce beta-hydroxy carboxylic acid soppiline A. The type III PKS pspB intercepts the elongated polyketide chain at round 8 from the HR-PKS pspA, followed by a tri-keto extension and decarboxylative aldol cyclization to produce 1,3,5-trisubstituted alkylresorcinol soppiline B. Subsequently, the cytochrome P450 monooxygenase pspC catalyzes three-step oxidations at the C-4 methyl group to carboxylic acid to yield soppiline C. The polypeptide is Type III polyketide synthase pspB (Penicillium soppii).